Here is a 392-residue protein sequence, read N- to C-terminus: GTPase Obg (392 aa).

The Obg domain occupies 1–159 (MKFIDEALIR…RDLQLELMLL (159 aa)). An OBG-type G domain is found at 160–333 (ADVGMLGLPN…LCRDIMDFIE (174 aa)). GTP is bound by residues 166–173 (GLPNAGKS), 191–195 (FTTLV), 213–216 (DIPG), 283–286 (NKID), and 314–316 (SAA). 2 residues coordinate Mg(2+): Ser173 and Thr193. Residues 361–392 (SEQVFTEDDQEEDDWDDWSEDDEEGVEIIYKP) form a disordered region. Residues 365–386 (FTEDDQEEDDWDDWSEDDEEGV) are compositionally biased toward acidic residues.

This sequence belongs to the TRAFAC class OBG-HflX-like GTPase superfamily. OBG GTPase family. As to quaternary structure, monomer. It depends on Mg(2+) as a cofactor.

The protein localises to the cytoplasm. Its function is as follows. An essential GTPase which binds GTP, GDP and possibly (p)ppGpp with moderate affinity, with high nucleotide exchange rates and a fairly low GTP hydrolysis rate. Plays a role in control of the cell cycle, stress response, ribosome biogenesis and in those bacteria that undergo differentiation, in morphogenesis control. The sequence is that of GTPase Obg from Histophilus somni (strain 2336) (Haemophilus somnus).